A 905-amino-acid chain; its full sequence is DNA mismatch repair protein MutS (905 aa).

Positions methionine 1–lysine 95 are disordered. The span at asparagine 38 to alanine 50 shows a compositional bias: basic and acidic residues. Glycine 721–serine 728 contributes to the ATP binding site.

This sequence belongs to the DNA mismatch repair MutS family.

This protein is involved in the repair of mismatches in DNA. It is possible that it carries out the mismatch recognition step. This protein has a weak ATPase activity. This Synechococcus sp. (strain CC9902) protein is DNA mismatch repair protein MutS.